A 216-amino-acid chain; its full sequence is Ethylene-responsive transcription factor ERF016 (216 aa).

Positions Lys-6–Pro-63 form a DNA-binding region, AP2/ERF. The interval Glu-121 to Asn-145 is disordered. The segment covering Gly-135–Asn-145 has biased composition (low complexity).

The protein belongs to the AP2/ERF transcription factor family. ERF subfamily.

The protein resides in the nucleus. In terms of biological role, probably acts as a transcriptional activator. Binds to the GCC-box pathogenesis-related promoter element. May be involved in the regulation of gene expression by stress factors and by components of stress signal transduction pathways. This chain is Ethylene-responsive transcription factor ERF016 (ERF016), found in Arabidopsis thaliana (Mouse-ear cress).